The sequence spans 122 residues: Large ribosomal subunit protein uL14 (122 aa).

Belongs to the universal ribosomal protein uL14 family. As to quaternary structure, part of the 50S ribosomal subunit. Forms a cluster with proteins L3 and L19. In the 70S ribosome, L14 and L19 interact and together make contacts with the 16S rRNA in bridges B5 and B8.

Binds to 23S rRNA. Forms part of two intersubunit bridges in the 70S ribosome. The chain is Large ribosomal subunit protein uL14 from Alkalilimnicola ehrlichii (strain ATCC BAA-1101 / DSM 17681 / MLHE-1).